A 572-amino-acid chain; its full sequence is MAAKEYDYIIIGAGSAGNVLATRLTEDRDVTVLLLEAGGPDYRFDFRTQMPAALAYPLQGRRYNWAYETDPEPFMNNRRMECGRGKGLGGSSLINGMCYIRGNALDYDGWAERKGLENWTYLDCLPYFRKAETRDAGANDYHGGDGPVHVTTSKRGVNPLFEAMVEAGVQAGYPRTDDLNGYQQEGFGPMDRTVTANGRRASTARGYLDQARPRPNLTIVTYATTDRILFSGKRAQGVVYLDGQAQITAHARREVLLCSGAIASPQILQRSGVGPGGWLRDLDIPVVLDLPGVGQNLQDHLEMYMQYECKEPVSLYPALLLRNQPAIGIEWMLKGTGIGASNHFEAGGFIRTRDDDPWPNIQYHFLPVAINYNGTNAIKMHGFQAHVGSMRSPSRGRVKLRSRDPREHPSILFNYMAEALDWREFRDAIRITREIIAQPALDRFRGRELSPGAELQSDAQIDAFVRARAETAYHPSCSCAMGYDDMAVVDGEGRVHGLEGLRVVDASIMPRITTGNLNAPTIMLAEKIADRIRGRAPLARSTAPYYVANGAPARGAKHVEHAPAPSVAAHTH.

7-36 (DYIIIGAGSAGNVLATRLTEDRDVTVLLLE) contributes to the FAD binding site. Residue His474 is the Proton acceptor of the active site.

It belongs to the GMC oxidoreductase family. Requires FAD as cofactor.

It catalyses the reaction choline + A = betaine aldehyde + AH2. It carries out the reaction betaine aldehyde + NAD(+) + H2O = glycine betaine + NADH + 2 H(+). The protein operates within amine and polyamine biosynthesis; betaine biosynthesis via choline pathway; betaine aldehyde from choline (cytochrome c reductase route): step 1/1. Functionally, involved in the biosynthesis of the osmoprotectant glycine betaine. Catalyzes the oxidation of choline to betaine aldehyde and betaine aldehyde to glycine betaine at the same rate. The sequence is that of Oxygen-dependent choline dehydrogenase from Paraburkholderia phymatum (strain DSM 17167 / CIP 108236 / LMG 21445 / STM815) (Burkholderia phymatum).